A 421-amino-acid polypeptide reads, in one-letter code: Gamma-glutamyl phosphate reductase (421 aa).

The protein belongs to the gamma-glutamyl phosphate reductase family.

It localises to the cytoplasm. It carries out the reaction L-glutamate 5-semialdehyde + phosphate + NADP(+) = L-glutamyl 5-phosphate + NADPH + H(+). The protein operates within amino-acid biosynthesis; L-proline biosynthesis; L-glutamate 5-semialdehyde from L-glutamate: step 2/2. Its function is as follows. Catalyzes the NADPH-dependent reduction of L-glutamate 5-phosphate into L-glutamate 5-semialdehyde and phosphate. The product spontaneously undergoes cyclization to form 1-pyrroline-5-carboxylate. The chain is Gamma-glutamyl phosphate reductase from Pseudomonas savastanoi pv. phaseolicola (strain 1448A / Race 6) (Pseudomonas syringae pv. phaseolicola (strain 1448A / Race 6)).